We begin with the raw amino-acid sequence, 192 residues long: Putative integrase/recombinase y4gC (192 aa).

A Tyr recombinase domain is found at 1–183 (MPSILERDQI…ATEDLRAIAL (183 aa)). Catalysis depends on residues R41, K66, H135, R138, and H161. The active-site O-(3'-phospho-DNA)-tyrosine intermediate is Y170.

Belongs to the 'phage' integrase family.

This Sinorhizobium fredii (strain NBRC 101917 / NGR234) protein is Putative integrase/recombinase y4gC.